The chain runs to 149 residues: MLFSEIKFLIFMSVICLSSSHPILMLSSLILLTLFLSLIFYFIYQFSIMSMMMILIILGGMLIIFMYMISLCPNKKMSFYKKLSVTFTMMLILIPYDSFMTKLEMININKIYSVNFVNMIILMMIFLIVMLTIISKNLSWINAPIQKFN.

4 consecutive transmembrane segments (helical) span residues 23 to 43 (ILML…FYFI), 51 to 71 (MMMI…MISL), 83 to 103 (LSVT…MTKL), and 114 to 134 (VNFV…LTII).

It belongs to the complex I subunit 6 family.

It is found in the mitochondrion membrane. It carries out the reaction a ubiquinone + NADH + 5 H(+)(in) = a ubiquinol + NAD(+) + 4 H(+)(out). Core subunit of the mitochondrial membrane respiratory chain NADH dehydrogenase (Complex I) that is believed to belong to the minimal assembly required for catalysis. Complex I functions in the transfer of electrons from NADH to the respiratory chain. The immediate electron acceptor for the enzyme is believed to be ubiquinone. This chain is NADH-ubiquinone oxidoreductase chain 6 (ND6), found in Rhipicephalus sanguineus (Brown dog tick).